The chain runs to 160 residues: Regulatory protein RecX (160 aa).

Belongs to the RecX family.

Its subcellular location is the cytoplasm. Its function is as follows. Modulates RecA activity. This Pelodictyon phaeoclathratiforme (strain DSM 5477 / BU-1) protein is Regulatory protein RecX.